A 327-amino-acid polypeptide reads, in one-letter code: Vacuolar protein sorting-associated protein 26A (327 aa).

The segment at 306–327 is disordered; sequence RTNFHQRFESPESQASAEQPEM. Residue S315 is modified to Phosphoserine. Positions 316–327 are enriched in polar residues; it reads PESQASAEQPEM.

Belongs to the VPS26 family. In terms of assembly, component of the heterotrimeric retromer cargo-selective complex (CSC), also described as vacuolar protein sorting subcomplex (VPS), formed by VPS26 (VPS26A or VPS26B), VPS29 and VPS35. The CSC has a highly elongated structure with VPS26 and VPS29 binding independently at opposite distal ends of VPS35 as central platform. The CSC is believed to associate with variable sorting nexins to form functionally distinct retromer complex variants. The originally described retromer complex (also called SNX-BAR retromer) is a pentamer containing the CSC and a heterodimeric membrane-deforming subcomplex formed between SNX1 or SNX2 and SNX5 or SNX6 (also called SNX-BAR subcomplex); the respective CSC and SNX-BAR subcomplexes associate with low affinity. The CSC associates with SNX3 to form a SNX3-retromer complex. The CSC associates with SNX27, the WASH complex and the SNX-BAR subcomplex to form the SNX27-retromer complex. Interacts with VPS29, VPS35, SNX27, SNX1, SNX2, SNX5, SNX6, SNX3, RAB7A, ECPAS, EHD1, WASHC5, SORL1.

Its subcellular location is the cytoplasm. The protein resides in the endosome membrane. It is found in the early endosome. In terms of biological role, acts as a component of the retromer cargo-selective complex (CSC). The CSC is believed to be the core functional component of retromer or respective retromer complex variants acting to prevent missorting of selected transmembrane cargo proteins into the lysosomal degradation pathway. The recruitment of the CSC to the endosomal membrane involves RAB7A and SNX3. The SNX-BAR retromer mediates retrograde transport of cargo proteins from endosomes to the trans-Golgi network (TGN) and is involved in endosome-to-plasma membrane transport for cargo protein recycling. The SNX3-retromer mediates the retrograde endosome-to-TGN transport of WLS distinct from the SNX-BAR retromer pathway. The SNX27-retromer is believed to be involved in endosome-to-plasma membrane trafficking and recycling of a broad spectrum of cargo proteins. The CSC complex seems to act as recruitment hub for other proteins, such as the WASH complex and TBC1D5. Required for retrograde transport of lysosomal enzyme receptor IGF2R. Required to regulate transcytosis of the polymeric immunoglobulin receptor (pIgR-pIgA). Required for the endosomal localization of WASHC2 (indicative for the WASH complex). Required for the endosomal localization of TBC1D5. Mediates retromer cargo recognition of SORL1 and is involved in trafficking of SORL1 implicated in sorting and processing of APP. Involved in retromer-independent lysosomal sorting of F2R. Involved in recycling of ADRB2. Acts redundantly with VSP26B in SNX-27 mediated endocytic recycling of SLC2A1/GLUT1. Enhances the affinity of SNX27 for PDZ-binding motifs in cargo proteins. This chain is Vacuolar protein sorting-associated protein 26A (Vps26a), found in Rattus norvegicus (Rat).